A 90-amino-acid chain; its full sequence is U7-theraphotoxin-Hhn1g (90 aa).

Residues 1 to 19 (MKTAIFTVVLALAVFAVLS) form the signal peptide. Residues 20 to 50 (FGWEANEKALSEEFTELIHEKEAASETEARE) constitute a propeptide that is removed on maturation. Intrachain disulfides connect Cys-51–Cys-65, Cys-58–Cys-70, and Cys-64–Cys-81.

It belongs to the neurotoxin 10 (Hwtx-1) family. 13 (Hntx-13) subfamily. In terms of tissue distribution, expressed by the venom gland.

The protein localises to the secreted. Functionally, ion channel inhibitor. The sequence is that of U7-theraphotoxin-Hhn1g from Cyriopagopus hainanus (Chinese bird spider).